We begin with the raw amino-acid sequence, 330 residues long: Ferredoxin--NADP reductase (330 aa).

Residues T18, E37, Q45, Y50, V90, F124, D286, and T327 each coordinate FAD.

This sequence belongs to the ferredoxin--NADP reductase type 2 family. In terms of assembly, homodimer. FAD is required as a cofactor.

It catalyses the reaction 2 reduced [2Fe-2S]-[ferredoxin] + NADP(+) + H(+) = 2 oxidized [2Fe-2S]-[ferredoxin] + NADPH. The protein is Ferredoxin--NADP reductase of Halalkalibacterium halodurans (strain ATCC BAA-125 / DSM 18197 / FERM 7344 / JCM 9153 / C-125) (Bacillus halodurans).